The sequence spans 104 residues: MGSKETPDLKIILEFGAGAELLFGNIKKRQLSLNGAQKWTIAELLKWMHANILTERAELFIQGDTVRPGILVLINDTDWELLGELEYELQPNDNVLFISTLHGG.

Gly104 carries the 1-thioglycine modification. A Glycyl lysine isopeptide (Gly-Lys) (interchain with K-? in acceptor proteins) cross-link involves residue Gly104.

This sequence belongs to the URM1 family. As to quaternary structure, interacts with cer. Post-translationally, C-terminal thiocarboxylation occurs in 2 steps, it is first acyl-adenylated (-COAMP) via the hesA/moeB/thiF part of the MOCS3 homolog, then thiocarboxylated (-COSH) via the rhodanese domain of the MOCS3 homolog.

It is found in the cytoplasm. It participates in tRNA modification; 5-methoxycarbonylmethyl-2-thiouridine-tRNA biosynthesis. Functionally, acts as a sulfur carrier required for 2-thiolation of mcm(5)S(2)U at tRNA wobble positions of cytosolic tRNA(Lys), tRNA(Glu) and tRNA(Gln). Serves as sulfur donor in tRNA 2-thiolation reaction by being thiocarboxylated (-COSH) at its C-terminus by MOCS3. The sulfur is then transferred to tRNA to form 2-thiolation of mcm(5)S(2)U. Also acts as a ubiquitin-like protein (UBL) that is covalently conjugated via an isopeptide bond to lysine residues of target proteins such as Prx2/Jafrac1, Ciao1, Eip71CD and GILT1. The thiocarboxylated form serves as substrate for conjugation and oxidative stress specifically induces the formation of UBL-protein conjugates. The protein is Ubiquitin-related modifier 1 homolog of Drosophila grimshawi (Hawaiian fruit fly).